Reading from the N-terminus, the 141-residue chain is Putative nickel-responsive regulator (141 aa).

The Ni(2+) site is built by His-80, His-91, His-93, and Cys-99.

This sequence belongs to the transcriptional regulatory CopG/NikR family. Ni(2+) is required as a cofactor.

Transcriptional regulator. The protein is Putative nickel-responsive regulator of Methanococcus maripaludis (strain C6 / ATCC BAA-1332).